The chain runs to 313 residues: Acetyl-coenzyme A carboxylase carboxyl transferase subunit alpha (313 aa).

In terms of domain architecture, CoA carboxyltransferase C-terminal spans 36-286; sequence RLDKEVKTIY…KEYFLDTLRT (251 aa).

Belongs to the AccA family. Acetyl-CoA carboxylase is a heterohexamer composed of biotin carboxyl carrier protein (AccB), biotin carboxylase (AccC) and two subunits each of ACCase subunit alpha (AccA) and ACCase subunit beta (AccD).

It is found in the cytoplasm. The enzyme catalyses N(6)-carboxybiotinyl-L-lysyl-[protein] + acetyl-CoA = N(6)-biotinyl-L-lysyl-[protein] + malonyl-CoA. It participates in lipid metabolism; malonyl-CoA biosynthesis; malonyl-CoA from acetyl-CoA: step 1/1. Component of the acetyl coenzyme A carboxylase (ACC) complex. First, biotin carboxylase catalyzes the carboxylation of biotin on its carrier protein (BCCP) and then the CO(2) group is transferred by the carboxyltransferase to acetyl-CoA to form malonyl-CoA. This is Acetyl-coenzyme A carboxylase carboxyl transferase subunit alpha from Helicobacter acinonychis (strain Sheeba).